Reading from the N-terminus, the 505-residue chain is DDB1- and CUL4-associated factor 17 (505 aa).

2 helical membrane-spanning segments follow: residues 186 to 206 (VLLY…ILEI) and 222 to 242 (GILI…QAII).

As to quaternary structure, interacts with DDB1, CUL4A and CUL4B.

It localises to the membrane. Its subcellular location is the nucleus. The protein resides in the nucleolus. The protein operates within protein modification; protein ubiquitination. In terms of biological role, may function as a substrate receptor for CUL4-DDB1 E3 ubiquitin-protein ligase complex. The protein is DDB1- and CUL4-associated factor 17 (Dcaf17) of Rattus norvegicus (Rat).